A 604-amino-acid chain; its full sequence is Elongation factor 4 (604 aa).

One can recognise a tr-type G domain in the interval 7 to 189; sequence SKIRNFCIIA…SIVHLVPPPS (183 aa). GTP is bound by residues 19-24 and 136-139; these read DHGKST and NKID.

It belongs to the TRAFAC class translation factor GTPase superfamily. Classic translation factor GTPase family. LepA subfamily.

The protein localises to the cell inner membrane. It catalyses the reaction GTP + H2O = GDP + phosphate + H(+). Functionally, required for accurate and efficient protein synthesis under certain stress conditions. May act as a fidelity factor of the translation reaction, by catalyzing a one-codon backward translocation of tRNAs on improperly translocated ribosomes. Back-translocation proceeds from a post-translocation (POST) complex to a pre-translocation (PRE) complex, thus giving elongation factor G a second chance to translocate the tRNAs correctly. Binds to ribosomes in a GTP-dependent manner. In Synechococcus elongatus (strain ATCC 33912 / PCC 7942 / FACHB-805) (Anacystis nidulans R2), this protein is Elongation factor 4.